Reading from the N-terminus, the 99-residue chain is NADH-quinone oxidoreductase subunit K (99 aa).

A run of 3 helical transmembrane segments spans residues 3 to 23 (PMYY…GVLL), 28 to 48 (IIVF…LVTF), and 62 to 82 (FFVM…IVAI).

The protein belongs to the complex I subunit 4L family. NDH-1 is composed of 14 different subunits. Subunits NuoA, H, J, K, L, M, N constitute the membrane sector of the complex.

It localises to the cell membrane. It catalyses the reaction a quinone + NADH + 5 H(+)(in) = a quinol + NAD(+) + 4 H(+)(out). In terms of biological role, NDH-1 shuttles electrons from NADH, via FMN and iron-sulfur (Fe-S) centers, to quinones in the respiratory chain. The immediate electron acceptor for the enzyme in this species is believed to be a menaquinone. Couples the redox reaction to proton translocation (for every two electrons transferred, four hydrogen ions are translocated across the cytoplasmic membrane), and thus conserves the redox energy in a proton gradient. The protein is NADH-quinone oxidoreductase subunit K of Acidothermus cellulolyticus (strain ATCC 43068 / DSM 8971 / 11B).